A 163-amino-acid chain; its full sequence is uncharacterized protein (163 aa).

Residues 7–162 (ISISAVKLPQ…NVVYMRLEMS (156 aa)) form the N-acetyltransferase domain.

Belongs to the acetyltransferase family.

Its subcellular location is the cytoplasm. It is found in the nucleus. This is an uncharacterized protein from Schizosaccharomyces pombe (strain 972 / ATCC 24843) (Fission yeast).